Here is a 675-residue protein sequence, read N- to C-terminus: NADH-quinone oxidoreductase subunit G (675 aa).

The 2Fe-2S ferredoxin-type domain occupies 1–78 (MIKLIIDGSE…GMVIHTDTSM (78 aa)). 4 residues coordinate [2Fe-2S] cluster: Cys-34, Cys-45, Cys-48, and Cys-62. The region spanning 78-117 (MVKKAREGVMEFLLINHPLDCPICDQGGECDLQDQAFRYG) is the 4Fe-4S His(Cys)3-ligated-type domain. The [4Fe-4S] cluster site is built by His-94, Cys-98, Cys-101, Cys-107, Cys-146, Cys-149, Cys-152, and Cys-196. The 4Fe-4S Mo/W bis-MGD-type domain occupies 215–271 (LKHTASIGVHDAEGSNIRIDSRADEIMRILPSVNEAINEAWISDKNRFCYDGLKYQR).

This sequence belongs to the complex I 75 kDa subunit family. Requires [2Fe-2S] cluster as cofactor. [4Fe-4S] cluster is required as a cofactor.

It carries out the reaction a quinone + NADH + 5 H(+)(in) = a quinol + NAD(+) + 4 H(+)(out). Its function is as follows. NDH-1 shuttles electrons from NADH, via FMN and iron-sulfur (Fe-S) centers, to quinones in the respiratory chain. Couples the redox reaction to proton translocation (for every two electrons transferred, four hydrogen ions are translocated across the cytoplasmic membrane), and thus conserves the redox energy in a proton gradient. The polypeptide is NADH-quinone oxidoreductase subunit G (nuoG) (Rickettsia typhi (strain ATCC VR-144 / Wilmington)).